Here is a 216-residue protein sequence, read N- to C-terminus: Serine acetyltransferase (216 aa).

This sequence belongs to the transferase hexapeptide repeat family.

It localises to the cytoplasm. It catalyses the reaction L-serine + acetyl-CoA = O-acetyl-L-serine + CoA. Its pathway is amino-acid biosynthesis; L-cysteine biosynthesis; L-cysteine from L-serine: step 1/2. Inhibited by cysteine. Its function is as follows. Catalyzes the acetylation of serine by acetyl-CoA to produce O-acetylserine (OAS). The protein is Serine acetyltransferase of Bacillus licheniformis (strain ATCC 14580 / DSM 13 / JCM 2505 / CCUG 7422 / NBRC 12200 / NCIMB 9375 / NCTC 10341 / NRRL NRS-1264 / Gibson 46).